Consider the following 3933-residue polypeptide: Circularly permutated Ras protein 2 (3933 aa).

Positions 12-46 form a coiled coil; sequence VHEVKKQELESILLQQEQEKQAKEEKESIKDTDDK. Disordered stretches follow at residues 23-101, 136-189, 1022-1054, and 2817-2839; these read ILLQ…IEKK, DIRE…RKET, ITTT…TTTT, and NNNN…RPTR. Basic and acidic residues predominate over residues 28 to 62; sequence EQEKQAKEEKESIKDTDDKPIEDTEHSTNNDKPIE. Residues 70–92 are compositionally biased toward low complexity; the sequence is TPTTTTTTKPTDEASSSSNNNNN. Residues 136–145 show a composition bias toward basic and acidic residues; that stretch reads DIREPTDKPF. Residues 146 to 156 are compositionally biased toward polar residues; the sequence is ENTSNIETTRQ. Positions 167-215 form a coiled coil; sequence KTEAERLEQEQKQKQYDENRKETDRKLELELERLKNKKEEVEQIRAYFQ. The segment covering 168–189 has biased composition (basic and acidic residues); sequence TEAERLEQEQKQKQYDENRKET. A compositionally biased stretch (low complexity) spans 2817–2826; sequence NNNNNNNRYN. GTP is bound by residues 2853-2857, 2913-2916, and 2976-2983; these read DTAGQ, TKAD, and GDGGIGKS. Disordered regions lie at residues 3036-3086, 3107-3142, and 3733-3754; these read LQSA…LSSR, RKSS…QDYE, and VIEP…PSSS. Positions 3070–3086 are enriched in low complexity; sequence PSSSSTRTSVSTSLSSR. A compositionally biased stretch (basic and acidic residues) spans 3107–3120; the sequence is RKSSLVEEESKRQY. Residues 3121 to 3141 are compositionally biased toward acidic residues; it reads DDDDESKSESSEYDDDDDQDY.

Belongs to the small GTPase superfamily. CpRas family.

The polypeptide is Circularly permutated Ras protein 2 (cpras2) (Dictyostelium discoideum (Social amoeba)).